A 321-amino-acid chain; its full sequence is Ornithine carbamoyltransferase (321 aa).

Residues 53 to 56, Gln80, Arg104, and 131 to 134 each bind carbamoyl phosphate; these read STRT and HPCQ. L-ornithine-binding positions include Asn166, Asp230, and 234 to 235; that span reads SM. Carbamoyl phosphate contacts are provided by residues 270 to 271 and Arg298; that span reads CL.

The protein belongs to the aspartate/ornithine carbamoyltransferase superfamily. OTCase family.

Its subcellular location is the cytoplasm. It carries out the reaction carbamoyl phosphate + L-ornithine = L-citrulline + phosphate + H(+). The protein operates within amino-acid biosynthesis; L-arginine biosynthesis; L-arginine from L-ornithine and carbamoyl phosphate: step 1/3. Functionally, reversibly catalyzes the transfer of the carbamoyl group from carbamoyl phosphate (CP) to the N(epsilon) atom of ornithine (ORN) to produce L-citrulline. This Bifidobacterium longum (strain NCC 2705) protein is Ornithine carbamoyltransferase.